A 112-amino-acid polypeptide reads, in one-letter code: B3 domain-containing protein At1g43171 (112 aa).

Residues 19–112 constitute a DNA-binding region (TF-B3); sequence DIVGNVALPK…FENKFIVLNF (94 aa).

The protein resides in the nucleus. This Arabidopsis thaliana (Mouse-ear cress) protein is B3 domain-containing protein At1g43171.